A 292-amino-acid chain; its full sequence is Small ribosomal subunit protein uS2 (292 aa).

The interval 265 to 292 (TETALDWSDEPVAGDWAAEPAADAQGGW) is disordered. The segment covering 277–292 (AGDWAAEPAADAQGGW) has biased composition (low complexity).

The protein belongs to the universal ribosomal protein uS2 family. In terms of assembly, component of the small ribosomal subunit. Mature ribosomes consist of a small (40S) and a large (60S) subunit. The 40S subunit contains about 33 different proteins and 1 molecule of RNA (18S). The 60S subunit contains about 49 different proteins and 3 molecules of RNA (25S, 5.8S and 5S). Interacts with RPS21.

Its subcellular location is the cytoplasm. Required for the assembly and/or stability of the 40S ribosomal subunit. Required for the processing of the 20S rRNA-precursor to mature 18S rRNA in a late step of the maturation of 40S ribosomal subunits. This is Small ribosomal subunit protein uS2 from Cryptococcus neoformans var. neoformans serotype D (strain B-3501A) (Filobasidiella neoformans).